A 481-amino-acid chain; its full sequence is Glutamate--tRNA ligase (481 aa).

The short motif at 9–19 (PSPTGNLHIGT) is the 'HIGH' region element. Positions 247 to 251 (KLSKR) match the 'KMSKS' region motif. K250 contributes to the ATP binding site.

The protein belongs to the class-I aminoacyl-tRNA synthetase family. Glutamate--tRNA ligase type 1 subfamily. In terms of assembly, monomer.

The protein localises to the cytoplasm. It catalyses the reaction tRNA(Glu) + L-glutamate + ATP = L-glutamyl-tRNA(Glu) + AMP + diphosphate. Its function is as follows. Catalyzes the attachment of glutamate to tRNA(Glu) in a two-step reaction: glutamate is first activated by ATP to form Glu-AMP and then transferred to the acceptor end of tRNA(Glu). The protein is Glutamate--tRNA ligase of Trichormus variabilis (strain ATCC 29413 / PCC 7937) (Anabaena variabilis).